The chain runs to 330 residues: uncharacterized protein (330 aa).

10 consecutive transmembrane segments (helical) span residues 27–47 (MGAYVSLAAAMAIVGSSVVVG), 56–76 (VFLSSGLRFLIASVVLLMLLF), 90–110 (VFVLLVQSFTGVFLFSICLLY), 119–139 (ESGILTSTTPMLIGILSFFLL), 147–167 (TLIGILLAVCGVMAINLFGAG), 176–196 (LFGNMLIIAAVIGEALFTLMA), 206–226 (LAISTFVSLFGFLFFLPFALF), 243–263 (YVLYYALFVTVLAFYLWYSGV), 270–290 (VSGIFTSVLPVSAVILSGVIL), and 294–314 (FEFVHFIGIACVIGGIFVTVI). 2 EamA domains span residues 38–163 (AIVG…AINL) and 187–314 (IGEA…VTVI).

Belongs to the EamA transporter family.

It localises to the cell membrane. This is an uncharacterized protein from Bacillus subtilis (strain 168).